The following is a 333-amino-acid chain: Adenosine deaminase (333 aa).

Zn(2+) is bound by residues His12 and His14. Substrate is bound by residues His14, Asp16, and Gly170. Position 197 (His197) interacts with Zn(2+). Glu200 (proton donor) is an active-site residue. Asp278 contributes to the Zn(2+) binding site. Asp279 serves as a coordination point for substrate.

It belongs to the metallo-dependent hydrolases superfamily. Adenosine and AMP deaminases family. Adenosine deaminase subfamily. Zn(2+) is required as a cofactor.

It catalyses the reaction adenosine + H2O + H(+) = inosine + NH4(+). The catalysed reaction is 2'-deoxyadenosine + H2O + H(+) = 2'-deoxyinosine + NH4(+). In terms of biological role, catalyzes the hydrolytic deamination of adenosine and 2-deoxyadenosine. The protein is Adenosine deaminase of Salmonella dublin (strain CT_02021853).